The following is a 604-amino-acid chain: Elongation factor 4 (604 aa).

The tr-type G domain maps to 10 to 191; it reads KNIRNFSIIA…KIITTIPAPS (182 aa). GTP-binding positions include 22–27 and 138–141; these read DHGKST and NKID.

This sequence belongs to the TRAFAC class translation factor GTPase superfamily. Classic translation factor GTPase family. LepA subfamily.

It is found in the cell inner membrane. It catalyses the reaction GTP + H2O = GDP + phosphate + H(+). Required for accurate and efficient protein synthesis under certain stress conditions. May act as a fidelity factor of the translation reaction, by catalyzing a one-codon backward translocation of tRNAs on improperly translocated ribosomes. Back-translocation proceeds from a post-translocation (POST) complex to a pre-translocation (PRE) complex, thus giving elongation factor G a second chance to translocate the tRNAs correctly. Binds to ribosomes in a GTP-dependent manner. The protein is Elongation factor 4 of Helicobacter pylori (strain J99 / ATCC 700824) (Campylobacter pylori J99).